The primary structure comprises 404 residues: Cysteine desulfurase IscS (404 aa).

Pyridoxal 5'-phosphate-binding positions include 75-76, asparagine 155, glutamine 183, and 203-205; these read AT and TGH. Lysine 206 is modified (N6-(pyridoxal phosphate)lysine). Residue threonine 243 participates in pyridoxal 5'-phosphate binding. The active-site Cysteine persulfide intermediate is cysteine 328. Cysteine 328 serves as a coordination point for [2Fe-2S] cluster.

Belongs to the class-V pyridoxal-phosphate-dependent aminotransferase family. NifS/IscS subfamily. In terms of assembly, homodimer. Forms a heterotetramer with IscU, interacts with other sulfur acceptors. The cofactor is pyridoxal 5'-phosphate.

It is found in the cytoplasm. It carries out the reaction (sulfur carrier)-H + L-cysteine = (sulfur carrier)-SH + L-alanine. It functions in the pathway cofactor biosynthesis; iron-sulfur cluster biosynthesis. In terms of biological role, master enzyme that delivers sulfur to a number of partners involved in Fe-S cluster assembly, tRNA modification or cofactor biosynthesis. Catalyzes the removal of elemental sulfur atoms from cysteine to produce alanine. Functions as a sulfur delivery protein for Fe-S cluster synthesis onto IscU, an Fe-S scaffold assembly protein, as well as other S acceptor proteins. The polypeptide is Cysteine desulfurase IscS (Cronobacter sakazakii (strain ATCC BAA-894) (Enterobacter sakazakii)).